The following is a 477-amino-acid chain: Asparaginyl-tRNA synthetase (477 aa).

The N-terminal 14 residues, 1 to 14 (MLGVRCLLRSVRFC), are a transit peptide targeting the mitochondrion. Lys353 carries the N6-acetyllysine modification.

The protein belongs to the class-II aminoacyl-tRNA synthetase family. In terms of assembly, homodimer.

It localises to the mitochondrion matrix. Its subcellular location is the mitochondrion. It carries out the reaction tRNA(Asn) + L-asparagine + ATP = L-asparaginyl-tRNA(Asn) + AMP + diphosphate + H(+). Functionally, mitochondrial aminoacyl-tRNA synthetase that catalyzes the specific attachment of the asparagine amino acid (aa) to the homologous transfer RNA (tRNA), further participating in protein synthesis. The reaction occurs in a two steps: asparagine is first activated by ATP to form Asn-AMP and then transferred to the acceptor end of tRNA(Asn). This is Asparaginyl-tRNA synthetase from Homo sapiens (Human).